A 479-amino-acid chain; its full sequence is Aldehyde dehydrogenase family 3 member B2 (479 aa).

Catalysis depends on residues Glu-223 and Cys-257. Cys-476 bears the Cysteine methyl ester mark. Residue Cys-476 is the site of S-geranylgeranyl cysteine attachment. Residues Thr-477 to Leu-479 constitute a propeptide, removed in mature form.

This sequence belongs to the aldehyde dehydrogenase family. Geranylgeranylation is important for localization to lipid droplets and enzyme activity. Expressed in testis, white adipose tissue, lung, small intestine, kidney, spleen and liver.

It is found in the lipid droplet. It carries out the reaction an aldehyde + NAD(+) + H2O = a carboxylate + NADH + 2 H(+). It catalyses the reaction a long-chain fatty aldehyde + NAD(+) + H2O = a long-chain fatty acid + NADH + 2 H(+). The enzyme catalyses a medium-chain fatty aldehyde + NAD(+) + H2O = a medium-chain fatty acid + NADH + 2 H(+). The catalysed reaction is hexadecanoate + NADH + 2 H(+) = hexadecanal + NAD(+) + H2O. It carries out the reaction octanal + NAD(+) + H2O = octanoate + NADH + 2 H(+). Its pathway is alcohol metabolism; ethanol degradation; acetate from ethanol: step 2/2. Its function is as follows. Oxidizes medium and long chain fatty aldehydes in lipid droplets into non-toxic fatty acids. This chain is Aldehyde dehydrogenase family 3 member B2, found in Mus musculus (Mouse).